A 680-amino-acid chain; its full sequence is Glutamine-dependent NAD(+) synthetase (680 aa).

Residues 12-276 (VRVAACTHHA…EHRSVADVDT (265 aa)) form the CN hydrolase domain. Glu52 (proton acceptor; for glutaminase activity) is an active-site residue. Catalysis depends on Lys121, which acts as the For glutaminase activity. Residue Tyr127 coordinates L-glutamine. Cys176 (nucleophile; for glutaminase activity) is an active-site residue. L-glutamine contacts are provided by Ser203 and Arg209. 366 to 373 (GVSGGLDS) is an ATP binding site. A deamido-NAD(+)-binding site is contributed by Asn456. Thr480 is a binding site for ATP. Deamido-NAD(+) is bound by residues Glu485, 490 to 493 (WSTY), and Lys636.

In the C-terminal section; belongs to the NAD synthetase family.

The enzyme catalyses deamido-NAD(+) + L-glutamine + ATP + H2O = L-glutamate + AMP + diphosphate + NAD(+) + H(+). The protein operates within cofactor biosynthesis; NAD(+) biosynthesis; NAD(+) from deamido-NAD(+) (L-Gln route): step 1/1. Functionally, catalyzes the ATP-dependent amidation of deamido-NAD to form NAD. Uses L-glutamine as a nitrogen source. The chain is Glutamine-dependent NAD(+) synthetase from Mycobacterium leprae (strain TN).